The primary structure comprises 807 residues: Serine/threonine-protein kinase B-raf (807 aa).

2 stretches are compositionally biased toward low complexity: residues 1–15 (MAAL…GASL) and 110–128 (SVSS…SSSL). Disordered regions lie at residues 1–36 (MAAL…YAGS) and 104–128 (GNGT…SSSL). Positions 155 to 227 (PIVRVFLPNK…TGEELHVEVL (73 aa)) constitute an RBD domain. The segment at 234-280 (THNFVRKTFFTLAFCDFCRKLLFQGFRCQTCGYKFHQRCSTEVPLMC) adopts a Phorbol-ester/DAG-type zinc-finger fold. Zn(2+) is bound by residues His-235, Cys-248, Cys-251, Cys-261, Cys-264, His-269, Cys-272, and Cys-280. Positions 303–313 (EETTLGETTPA) are enriched in polar residues. Disordered regions lie at residues 303–372 (EETT…VHIN) and 434–494 (STAG…EIPD). Low complexity predominate over residues 314–328 (SGSYPSVPPSDSVGP). Composition is skewed to basic and acidic residues over residues 348-363 (PADE…RDRS) and 463-487 (QRER…RDSS). A Protein kinase domain is found at 497 to 757 (ITVGQRIGSG…PQILASIELL (261 aa)). ATP contacts are provided by residues 503–511 (IGSGSFGTV) and Lys-523. Asp-616 (proton acceptor) is an active-site residue. A Phosphoserine; by MAPK1 modification is found at Ser-790. A Phosphothreonine; by MAPK1 modification is found at Thr-793.

It belongs to the protein kinase superfamily. TKL Ser/Thr protein kinase family. RAF subfamily. The cofactor is Zn(2+). Post-translationally, phosphorylated. In terms of tissue distribution, expressed preferentially in neural tissue.

It localises to the nucleus. The protein resides in the cytoplasm. Its subcellular location is the cell membrane. It catalyses the reaction L-seryl-[protein] + ATP = O-phospho-L-seryl-[protein] + ADP + H(+). It carries out the reaction L-threonyl-[protein] + ATP = O-phospho-L-threonyl-[protein] + ADP + H(+). Its activity is regulated as follows. In quiescent cells, maintained in an inactive state via an intramolecular interaction between the protein kinase and N-terminal domains. Following mitogen-mediated cell activation, binds via its RGB domain to active HRAS (GTP-bound) which releases the inhibitory intramolecular interaction between the two domains. This allows the MAP2K1-mediated dimerization of KSR1 or KSR2, and BRAF which activates BRAF. Functionally, protein kinase involved in the activation of the MAP signaling cascade. May play a role in transducing specific signals in neural cells. The polypeptide is Serine/threonine-protein kinase B-raf (Coturnix japonica (Japanese quail)).